Consider the following 120-residue polypeptide: Large ribosomal subunit protein bL19 (120 aa).

Belongs to the bacterial ribosomal protein bL19 family.

Its function is as follows. This protein is located at the 30S-50S ribosomal subunit interface and may play a role in the structure and function of the aminoacyl-tRNA binding site. This chain is Large ribosomal subunit protein bL19, found in Marinomonas sp. (strain MWYL1).